An 827-amino-acid polypeptide reads, in one-letter code: Glycerol-3-phosphate acyltransferase 1, mitochondrial (827 aa).

Residues 1-87 (MEESSVTVGT…FFNPSIPSLG (87 aa)) lie on the Cytoplasmic side of the membrane. Residues 80-120 (NPSIPSLGLRNVIYINETHTRHRGWLARRLSYILFVQERDV) form an important for mitochondrial localization region. An intramembrane segment occupies 88–118 (LRNVIYINETHTRHRGWLARRLSYILFVQER). At 119-827 (DVHKGMFATS…LEYILSFVVL (709 aa)) the chain is on the cytoplasmic side. The HXXXXD motif motif lies at 230–235 (HRSHID). 5 residues coordinate CoA: R278, R279, K288, R293, and R328. S380 bears the Phosphoserine mark. CoA is bound at residue R462. S687 and S694 each carry phosphoserine. Residues K779 and K783 each carry the N6-acetyllysine modification.

It belongs to the GPAT/DAPAT family. Highest levels in liver, intermediate levels in muscle and kidney, and lowest levels in lung and brain.

The protein localises to the mitochondrion outer membrane. The enzyme catalyses sn-glycerol 3-phosphate + an acyl-CoA = a 1-acyl-sn-glycero-3-phosphate + CoA. The catalysed reaction is (9Z,12Z)-octadecadienoyl-CoA + sn-glycerol 3-phosphate = 1-(9Z,12Z)-octadecadienoyl-sn-glycero-3-phosphate + CoA. It carries out the reaction sn-glycerol 3-phosphate + (9Z)-octadecenoyl-CoA = 1-(9Z-octadecenoyl)-sn-glycero-3-phosphate + CoA. It catalyses the reaction sn-glycerol 3-phosphate + octadecanoyl-CoA = 1-octadecanoyl-sn-glycero-3-phosphate + CoA. The enzyme catalyses sn-glycerol 3-phosphate + hexadecanoyl-CoA = 1-hexadecanoyl-sn-glycero-3-phosphate + CoA. The catalysed reaction is dodecanoyl-CoA + sn-glycerol 3-phosphate = 1-dodecanoyl-sn-glycerol 3-phosphate + CoA. It carries out the reaction 1-acyl-sn-glycero-3-phospho-(1'-sn-glycerol) + an acyl-CoA = a 1,2-diacyl-sn-glycero-3-phospho-(1'-sn-glycerol) + CoA. It functions in the pathway phospholipid metabolism; CDP-diacylglycerol biosynthesis; CDP-diacylglycerol from sn-glycerol 3-phosphate: step 1/3. Mitochondrial membrane protein that catalyzes the essential first step of biosynthesis of glycerolipids such as triglycerides, phosphatidic acids and lysophosphatidic acids. Esterifies acyl-group from acyl-coenzyme A (acyl-CoA) to the sn-1 position of glycerol-3-phosphate, to produce lysophosphatidic acid. Has a narrow hydrophobic binding cleft that selects for a linear acyl chain. Catalytic activity is higher for substrates with a 16-carbon acyl chain. The sequence is that of Glycerol-3-phosphate acyltransferase 1, mitochondrial from Mus musculus (Mouse).